A 347-amino-acid chain; its full sequence is Haptoglobin (347 aa).

Positions 1-18 (MRALGAVVTLLLWGQLFA) are cleaved as a signal peptide. The Sushi domain occupies 31–88 (DSCPKPPEIANGYVEHLVRYRCRQFYRLRTEGDGVYTLNDEKQWVNTAAGEKLPECEA). 4 disulfide bridges follow: C52/C86, C90/C207, C250/C281, and C292/C322. The Peptidase S1 domain maps to 103–345 (IIGGSMDAKG…LKDWVQETMA (243 aa)). N-linked (GlcNAc...) asparagine glycans are attached at residues N148, N182, N256, and N264. Residues 259–264 (VPEKKN) form an interaction with CD163 region.

It belongs to the peptidase S1 family. As to quaternary structure, tetramer of two alpha and two beta chains; disulfide-linked. The hemoglobin/haptoglobin complex is composed of a haptoglobin dimer bound to two hemoglobin alpha-beta dimers. Interacts with CD163. Interacts with ERGIC3. Expressed by the liver and secreted in plasma.

It localises to the secreted. As a result of hemolysis, hemoglobin is found to accumulate in the kidney and is secreted in the urine. Haptoglobin captures, and combines with free plasma hemoglobin to allow hepatic recycling of heme iron and to prevent kidney damage. Haptoglobin also acts as an antioxidant, has antibacterial activity and plays a role in modulating many aspects of the acute phase response. Hemoglobin/haptoglobin complexes are rapidly cleared by the macrophage CD163 scavenger receptor expressed on the surface of liver Kupfer cells through an endocytic lysosomal degradation pathway. The sequence is that of Haptoglobin (Hp) from Mus saxicola (Brown spiny mouse).